The chain runs to 393 residues: Argininosuccinate synthase (393 aa).

Residues 7–15 (AYSGGLDTS) and alanine 34 contribute to the ATP site. L-citrulline is bound by residues tyrosine 85 and serine 90. Position 115 (glycine 115) interacts with ATP. L-aspartate contacts are provided by threonine 117, asparagine 121, and aspartate 122. Asparagine 121 provides a ligand contact to L-citrulline. L-citrulline is bound by residues arginine 125, serine 176, serine 185, glutamate 261, and tyrosine 273.

It belongs to the argininosuccinate synthase family. Type 1 subfamily. In terms of assembly, homotetramer.

The protein resides in the cytoplasm. The enzyme catalyses L-citrulline + L-aspartate + ATP = 2-(N(omega)-L-arginino)succinate + AMP + diphosphate + H(+). It participates in amino-acid biosynthesis; L-arginine biosynthesis; L-arginine from L-ornithine and carbamoyl phosphate: step 2/3. The protein is Argininosuccinate synthase of Ehrlichia canis (strain Jake).